The primary structure comprises 653 residues: Zinc finger CCCH domain-containing protein 54 (653 aa).

The interval 242–261 (NGGGGGGGSPARARRSNGLS) is disordered. The segment at 260–287 (LSTRRPCHYFSKGICKNGQNCHYSHHQV) adopts a C3H1-type zinc-finger fold. Residues 313–396 (SLETLEMEIT…GQHSVVLAED (84 aa)) enclose the HTH OST-type domain. The region spanning 422 to 497 (HQIYLTFPAE…SRVLVKPYRE (76 aa)) is the RRM domain. The stretch at 537 to 565 (RLMRKQLAEKREMLLEMERRRATVRRLES) forms a coiled coil. The tract at residues 598–623 (PSLASPDPLEIVSNSQAPPTQAGNIY) is disordered. Positions 609-620 (VSNSQAPPTQAG) are enriched in polar residues.

The protein is Zinc finger CCCH domain-containing protein 54 of Oryza sativa subsp. japonica (Rice).